A 359-amino-acid polypeptide reads, in one-letter code: Heat-inducible transcription repressor HrcA (359 aa).

It belongs to the HrcA family.

Its function is as follows. Negative regulator of class I heat shock genes (grpE-dnaK-dnaJ and groELS operons). Prevents heat-shock induction of these operons. This chain is Heat-inducible transcription repressor HrcA, found in Sinorhizobium fredii (strain NBRC 101917 / NGR234).